The sequence spans 145 residues: Small ribosomal subunit protein uS9 (145 aa).

This sequence belongs to the universal ribosomal protein uS9 family.

It is found in the cytoplasm. This Gossypium hirsutum (Upland cotton) protein is Small ribosomal subunit protein uS9 (RPS16).